Reading from the N-terminus, the 362-residue chain is O-methyltransferase 13 (362 aa).

Positions 181, 205, 228, 248, and 262 each coordinate S-adenosyl-L-homocysteine. Residue aspartate 228 coordinates S-adenosyl-L-methionine. Residue histidine 266 is the Proton acceptor of the active site.

Belongs to the class I-like SAM-binding methyltransferase superfamily. Cation-independent O-methyltransferase family. As to quaternary structure, homodimer. Mainly expressed in vascular and cortical tissues.

The catalysed reaction is dopamine + S-adenosyl-L-methionine = 3-methoxytyramine + S-adenosyl-L-homocysteine + H(+). It functions in the pathway aromatic compound metabolism. Its pathway is alkaloid biosynthesis. O-methyltransferase participating in the biosynthesis of natural products derived from phenylethylamine, including mescaline, a natural hallucinogen potentially used in psychotherapeutic treatments. Catalyzes the O-methylation of dopamine and 4,5-dihydroxy-3-methoxyphenethylamine. The sequence is that of O-methyltransferase 13 from Lophophora williamsii (Peyote).